A 602-amino-acid polypeptide reads, in one-letter code: T-box transcription factor TBX15 (602 aa).

The tract at residues 43–95 (SMEALSPAGPLGDTDDPATHGLEPHPDSEQSTGSDSEVLTERTSCSFSTHTDL) is disordered. Over residues 71 to 94 (EQSTGSDSEVLTERTSCSFSTHTD) the composition is skewed to polar residues. Positions 122–304 (LWKRFHDIGT…RNPFAKGFRD (183 aa)) form a DNA-binding region, T-box. Threonine 330 carries the phosphothreonine modification. Disordered stretches follow at residues 338–369 (QKQQ…LSPS) and 425–444 (QSGT…QRTP). Low complexity predominate over residues 346-369 (GTSPTTSSTGTPSPSASSHLLSPS).

In terms of assembly, can form a heterodimer with TBX18.

The protein resides in the nucleus. Functionally, probable transcriptional regulator involved in the development of the skeleton of the limb, vertebral column and head. Acts by controlling the number of mesenchymal precursor cells and chondrocytes. The chain is T-box transcription factor TBX15 (Tbx15) from Mus musculus (Mouse).